Here is a 628-residue protein sequence, read N- to C-terminus: CMP-5'-(3-aminopropyl)phosphonate synthase (628 aa).

Residues 1 to 255 (MNENRTFATP…DPGDQRQADF (255 aa)) form a mobA-like NTP transferase region. Residues 278 to 628 (GVTDHALLYN…TTEGAGRADG (351 aa)) are decarboxylase. Lysine 466 carries the N6-(pyridoxal phosphate)lysine modification.

In the N-terminal section; belongs to the MobA family. This sequence in the C-terminal section; belongs to the class-I pyridoxal-phosphate-dependent aminotransferase family. It depends on Mg(2+) as a cofactor. Pyridoxal 5'-phosphate is required as a cofactor.

The catalysed reaction is 2-amino-4-phosphonobutanoate + CTP = CMP-5'-(3-amino-3-carboxypropyl)phosphonate + diphosphate. It catalyses the reaction CMP-5'-(3-amino-3-carboxypropyl)phosphonate + H(+) = CMP-5'-(3-aminopropyl)phosphonate + CO2. It functions in the pathway antibiotic biosynthesis. In terms of biological role, bifunctional cytidylyltransferase/decarboxylase involved in the biosynthesis of the phosphonate antibiotic FR-900098, a potent antimalarial agent that acts as an inhibitor of 1-deoxy-D-xylulose 5-phosphate reductoisomerase (DXR), the first enzyme in the nonmevalonate pathway for isoprenoid biosynthesis. Catalyzes the condensation of 2-amino-4-phosphonobutyrate (2APn) and CTP to form CMP-5'-2APn and then decarboxylates CMP-5'-2APn to yield CMP-5'-(3-aminopropyl)phosphonate (CMP-5'-3APn). The sequence is that of CMP-5'-(3-aminopropyl)phosphonate synthase from Streptomyces rubellomurinus (strain ATCC 31215).